We begin with the raw amino-acid sequence, 216 residues long: Elongation factor Ts (216 aa).

Positions 81–84 (TDFV) are involved in Mg(2+) ion dislocation from EF-Tu.

It belongs to the EF-Ts family.

It localises to the cytoplasm. Functionally, associates with the EF-Tu.GDP complex and induces the exchange of GDP to GTP. It remains bound to the aminoacyl-tRNA.EF-Tu.GTP complex up to the GTP hydrolysis stage on the ribosome. This Geobacter sulfurreducens (strain ATCC 51573 / DSM 12127 / PCA) protein is Elongation factor Ts.